Consider the following 195-residue polypeptide: uncharacterized protein (195 aa).

Positions 1–21 (MHFSSCVLVSALAIVTNVATA) are cleaved as a signal peptide. 2 N-linked (GlcNAc...) asparagine glycosylation sites follow: Asn-62 and Asn-109. A disordered region spans residues 119–141 (DWDEDTVTGENAPDSGEPFSTSH).

The protein resides in the secreted. This is an uncharacterized protein from Arthroderma benhamiae (strain ATCC MYA-4681 / CBS 112371) (Trichophyton mentagrophytes).